The chain runs to 460 residues: Cysteine--tRNA ligase (460 aa).

Residue Cys28 participates in Zn(2+) binding. A 'HIGH' region motif is present at residues 30–40; that stretch reads MTVYDYCHLGH. Residues Cys209, His234, and Glu238 each contribute to the Zn(2+) site. The 'KMSKS' region motif lies at 266-270; that stretch reads KMSKS. Lys269 is an ATP binding site.

It belongs to the class-I aminoacyl-tRNA synthetase family. Monomer. Zn(2+) is required as a cofactor.

It localises to the cytoplasm. The enzyme catalyses tRNA(Cys) + L-cysteine + ATP = L-cysteinyl-tRNA(Cys) + AMP + diphosphate. The chain is Cysteine--tRNA ligase from Pseudomonas savastanoi pv. phaseolicola (strain 1448A / Race 6) (Pseudomonas syringae pv. phaseolicola (strain 1448A / Race 6)).